The following is a 661-amino-acid chain: Bifunctional xylanase/xylan deacetylase (661 aa).

Residues 1 to 27 form the signal peptide; it reads MKLPTLGKCVVRTLMGAVALGAISVNA. The region spanning 29–226 is the GH11 domain; it reads TLSSNSTGTN…SRGSSDITVS (198 aa). The Nucleophile; for endoxylanase activity role is filled by glutamate 116. Glutamate 213 acts as the Proton donor; for endoxylanase activity in catalysis. Positions 220–259 are disordered; it reads SSDITVSEGTSGGGTSSVGGASSSVNSSTGGGSSGGITVR. Low complexity predominate over residues 237–247; it reads VGGASSSVNSS. A polysaccharide deacetylase region spans residues 394 to 577; sequence SNCSGYVGIT…AKGLCPGRID (184 aa). One can recognise a NodB homology domain in the interval 398 to 574; it reads GYVGITFDDG…NLRAKGLCPG (177 aa). Residues 578-610 are disordered; the sequence is PNTGRAVAPSSSGGSSSVALSSSSRSSSSAGGN. Positions 581–608 are enriched in low complexity; the sequence is GRAVAPSSSGGSSSVALSSSSRSSSSAG. The 30-residue stretch at 616–645 folds into the CBM10 domain; the sequence is QCNWWGTFYPLCQTQTSGWGWENSRSCIST.

In the N-terminal section; belongs to the glycosyl hydrolase 11 (cellulase G) family.

Its subcellular location is the secreted. It catalyses the reaction Endohydrolysis of (1-&gt;4)-beta-D-xylosidic linkages in xylans.. The enzyme catalyses Deacetylation of xylans and xylo-oligosaccharides.. It participates in glycan degradation; xylan degradation. In terms of biological role, endo-acting xylanase which specifically cleaves internal linkages on the xylan backbone, releasing xylooligosaccharides. Is able to hydrolyze oat spelt xylan and the arabinoxylans from wheat and rye, releasing xylobiose as the major product. Also likely catalyzes, via its C-terminal domain, the removal of acetyl groups from acetylated xylan. Thus, has the capability of hydrolyzing acetylated xylan. Does not attack mannan, galactan, arabinan or any cellulosic substrates. The protein is Bifunctional xylanase/xylan deacetylase (xyn11A) of Cellvibrio japonicus (Pseudomonas fluorescens subsp. cellulosa).